The sequence spans 1645 residues: Thrombospondin type-1 domain-containing protein 7A (1645 aa).

The signal sequence occupies residues 1–38 (MGLRAGRLASPSRGVLQLLRLPLLLLLLLSSGARGAAA). Over 39 to 1595 (QGDTEVPTLY…FGPDGRLKTW (1557 aa)) the chain is Extracellular. TSP type-1 domains lie at 46–105 (TLYL…KVCD), 109–181 (ELYD…IPCQ), and 183–236 (DCIV…NPCE). N223 carries an N-linked (GlcNAc...) asparagine glycan. Residues 255–300 (PHTRQARQARRRGKNKEREKERGKAVKDPEARELIKKKRNRNRQNR) form a disordered region. A coiled-coil region spans residues 256-304 (HTRQARQARRRGKNKEREKERGKAVKDPEARELIKKKRNRNRQNRQENR). The span at 258–269 (RQARQARRRGKN) shows a compositional bias: basic residues. The span at 270 to 288 (KEREKERGKAVKDPEAREL) shows a compositional bias: basic and acidic residues. Residues 289-298 (IKKKRNRNRQ) show a composition bias toward basic residues. N-linked (GlcNAc...) asparagine glycosylation is present at N321. 16 TSP type-1 domains span residues 349-405 (ECQV…VSQG), 412-499 (ATYG…VPCP), 501-563 (ECEV…PSCY), 623-684 (DCVL…HPCT), 685-758 (VYHW…LPCR), 760-820 (DCVV…PTCH), 821-893 (SYRW…IPCQ), 895-948 (DCQF…CPCD), 949-1022 (KYNA…IPCP), 1024-1084 (DCKL…SDCN), 1085-1152 (QYIW…LPCP), 1154-1208 (DCVI…KNCY), 1209-1272 (HYDY…VECP), 1274-1329 (NCQL…KPCY), 1330-1400 (RWQY…QPCP), and 1402-1463 (DCYL…GQCY). 3 cysteine pairs are disulfide-bonded: C424/C494, C444/C498, and C455/C483. The N-linked (GlcNAc...) asparagine glycan is linked to N439. N489 carries an N-linked (GlcNAc...) asparagine glycan. 2 disulfide bridges follow: C624/C666 and C635/C639. N668 carries N-linked (GlcNAc...) asparagine glycosylation. Disulfide bonds link C678/C683, C696/C753, C717/C757, C728/C741, C761/C803, C772/C776, and C813/C819. N706 carries an N-linked (GlcNAc...) asparagine glycan. Residue N957 is glycosylated (N-linked (GlcNAc...) asparagine). Intrachain disulfides connect C961–C1017, C983–C1021, C994–C1007, C1025–C1062, C1036–C1040, and C1079–C1083. N-linked (GlcNAc...) asparagine glycosylation occurs at N1032. A disulfide bridge connects residues C1201 and C1207. Residue N1213 is glycosylated (N-linked (GlcNAc...) asparagine). 12 disulfides stabilise this stretch: C1220/C1267, C1228/C1271, C1239/C1252, C1275/C1313, C1286/C1290, C1323/C1328, C1339/C1395, C1346/C1399, C1357/C1376, C1403/C1447, C1414/C1418, and C1457/C1462. The N-linked (GlcNAc...) asparagine glycan is linked to N1264. A glycan (N-linked (GlcNAc...) asparagine) is linked at N1354. 2 N-linked (GlcNAc...) asparagine glycosylation sites follow: N1488 and N1535. A helical membrane pass occupies residues 1596–1616 (VYGVAAGAFVLLVFIVSMIYL). The Cytoplasmic segment spans residues 1617–1645 (ACKKPKKPQRRQNNRLKPLTLAYDGDADM).

Proteolytic cleavage in the extracellular region generates a 210 kDa soluble form. Post-translationally, extensively N-glycosylated. Detected on kidney podocytes along the glomerular capillary wall (at protein level).

The protein localises to the cell membrane. It localises to the cell projection. It is found in the secreted. Functionally, plays a role in actin cytoskeleton rearrangement. In terms of biological role, the soluble form promotes endothelial cell migration and filopodia formation during sprouting angiogenesis via a FAK-dependent mechanism. The protein is Thrombospondin type-1 domain-containing protein 7A (Thsd7a) of Mus musculus (Mouse).